The chain runs to 176 residues: 4-hydroxylaminobenzoate lyase (176 aa).

This sequence belongs to the PnbB family.

It catalyses the reaction 4-hydroxylaminobenzoate + H2O + H(+) = 3,4-dihydroxybenzoate + NH4(+). Functionally, lyase involved in the degradation of nitroaromatic compounds. Catalyzes the conversion of 4-hydroxylaminobenzoate to 3,4-dihydroxybenzoate (protocatechuate). Required for the catabolism of 4-nitrotoluene. This Pseudomonas putida (Arthrobacter siderocapsulatus) protein is 4-hydroxylaminobenzoate lyase.